Here is a 423-residue protein sequence, read N- to C-terminus: MSSLAEIASRPENLELLAEGKTKQIFDIKGEKDYVLIRSKDSLTAFNAVRKNELEGKSRIASKTTSNVFEYLQLLGLPTHFEKSISETEFVARKCTMIPIEWVARRVATGSFLKRNPGVKEGFRFNDLKLETFFKDDANDDPQWTDEQIVSNGLMIDHLKIGREEISLMKKMTKLVFRALEKGWALSNSALIDMKIEFGVTVEGEILLADVIDNDSWRVWPENDRRLQLDKQVYRDMKEVTEEGLALVLKNYTKVMDITATFSKHQQKCHVLVIMGSGSDGVFARKISDEAKKFGLETTLKVSSAHKTTSDTLEVIADFEESGVPTVVIAVAGRSNGLGPVIAGNSSLPVINCPPPSESTSLDIWSSLRMPNGIGCTTVLDPSEAALAAAKILASHNHIVFGKVLTAQLKNQINIYNANRKLE.

The SAICAR synthetase stretch occupies residues 1–263 (MSSLAEIASR…KVMDITATFS (263 aa)). The interval 264-423 (KHQQKCHVLV…NIYNANRKLE (160 aa)) is AIR carboxylase.

The protein in the N-terminal section; belongs to the SAICAR synthetase family. It in the C-terminal section; belongs to the AIR carboxylase family. Class II subfamily.

The catalysed reaction is 5-amino-1-(5-phospho-D-ribosyl)imidazole-4-carboxylate + L-aspartate + ATP = (2S)-2-[5-amino-1-(5-phospho-beta-D-ribosyl)imidazole-4-carboxamido]succinate + ADP + phosphate + 2 H(+). It catalyses the reaction 5-amino-1-(5-phospho-D-ribosyl)imidazole-4-carboxylate + H(+) = 5-amino-1-(5-phospho-beta-D-ribosyl)imidazole + CO2. The protein operates within purine metabolism; IMP biosynthesis via de novo pathway; 5-amino-1-(5-phospho-D-ribosyl)imidazole-4-carboxamide from 5-amino-1-(5-phospho-D-ribosyl)imidazole-4-carboxylate: step 1/2. Its pathway is purine metabolism; IMP biosynthesis via de novo pathway; 5-amino-1-(5-phospho-D-ribosyl)imidazole-4-carboxylate from 5-amino-1-(5-phospho-D-ribosyl)imidazole (carboxylase route): step 1/1. In Caenorhabditis elegans, this protein is Probable multifunctional protein ADE2.